A 434-amino-acid chain; its full sequence is Asparagine--tRNA ligase (434 aa).

The protein belongs to the class-II aminoacyl-tRNA synthetase family.

It is found in the cytoplasm. The enzyme catalyses tRNA(Asn) + L-asparagine + ATP = L-asparaginyl-tRNA(Asn) + AMP + diphosphate + H(+). The chain is Asparagine--tRNA ligase from Pyrococcus abyssi (strain GE5 / Orsay).